The primary structure comprises 129 residues: Small ribosomal subunit protein uS11 (129 aa).

The protein belongs to the universal ribosomal protein uS11 family. As to quaternary structure, part of the 30S ribosomal subunit. Interacts with proteins S7 and S18. Binds to IF-3.

Functionally, located on the platform of the 30S subunit, it bridges several disparate RNA helices of the 16S rRNA. Forms part of the Shine-Dalgarno cleft in the 70S ribosome. The protein is Small ribosomal subunit protein uS11 of Pseudomonas entomophila (strain L48).